Consider the following 232-residue polypeptide: Clarin-1 (232 aa).

A helical membrane pass occupies residues 8–28 (IIFCMAGVFSFACALGVVTAL). The N-linked (GlcNAc...) asparagine glycan is linked to asparagine 48. The next 3 helical transmembrane spans lie at 101 to 121 (VILF…FFMY), 135 to 155 (LGLY…MILF), and 186 to 206 (TTSF…GLLI).

It belongs to the clarin family. In terms of tissue distribution, widely expressed. Found in the retina.

Its subcellular location is the cell membrane. Its function is as follows. May have a role in the excitatory ribbon synapse junctions between hair cells and cochlear ganglion cells and presumably also in analogous synapses within the retina. This Homo sapiens (Human) protein is Clarin-1 (CLRN1).